Here is a 206-residue protein sequence, read N- to C-terminus: Large ribosomal subunit protein uL13y (206 aa).

Belongs to the universal ribosomal protein uL13 family.

This chain is Large ribosomal subunit protein uL13y (RPL13AB), found in Arabidopsis thaliana (Mouse-ear cress).